The sequence spans 698 residues: Methionine--tRNA ligase (698 aa).

Positions 18-28 match the 'HIGH' region motif; it reads PYANGDLHVGH. Zn(2+) is bound by residues Cys149, Cys152, Cys161, and Cys165. Thr350 is an ATP binding site. The tract at residues 567-590 is disordered; sequence EAADAGDEEGEDEDEEPPAADLEP. Positions 570–584 are enriched in acidic residues; that stretch reads DAGDEEGEDEDEEPP. One can recognise a tRNA-binding domain in the interval 600-698; the sequence is DFQDLDIRVA…EDAEPGTKVQ (99 aa).

Belongs to the class-I aminoacyl-tRNA synthetase family. MetG type 1 subfamily. As to quaternary structure, homodimer. It depends on Zn(2+) as a cofactor.

The protein localises to the cytoplasm. The catalysed reaction is tRNA(Met) + L-methionine + ATP = L-methionyl-tRNA(Met) + AMP + diphosphate. Functionally, is required not only for elongation of protein synthesis but also for the initiation of all mRNA translation through initiator tRNA(fMet) aminoacylation. This Natronomonas pharaonis (strain ATCC 35678 / DSM 2160 / CIP 103997 / JCM 8858 / NBRC 14720 / NCIMB 2260 / Gabara) (Halobacterium pharaonis) protein is Methionine--tRNA ligase.